We begin with the raw amino-acid sequence, 181 residues long: Adenine phosphoribosyltransferase (181 aa).

It belongs to the purine/pyrimidine phosphoribosyltransferase family. In terms of assembly, homodimer.

It localises to the cytoplasm. It carries out the reaction AMP + diphosphate = 5-phospho-alpha-D-ribose 1-diphosphate + adenine. The protein operates within purine metabolism; AMP biosynthesis via salvage pathway; AMP from adenine: step 1/1. Catalyzes a salvage reaction resulting in the formation of AMP, that is energically less costly than de novo synthesis. This Brucella abortus (strain S19) protein is Adenine phosphoribosyltransferase.